The sequence spans 396 residues: Phosphoglycerate kinase (396 aa).

Substrate-binding positions include 19 to 21 (DFN), Arg34, 57 to 60 (HLGK), Arg116, and Arg153. Residues Lys204, Glu324, and 351–354 (GGDT) contribute to the ATP site.

It belongs to the phosphoglycerate kinase family. Monomer.

The protein localises to the cytoplasm. It catalyses the reaction (2R)-3-phosphoglycerate + ATP = (2R)-3-phospho-glyceroyl phosphate + ADP. The protein operates within carbohydrate degradation; glycolysis; pyruvate from D-glyceraldehyde 3-phosphate: step 2/5. The sequence is that of Phosphoglycerate kinase from Maridesulfovibrio salexigens (strain ATCC 14822 / DSM 2638 / NCIMB 8403 / VKM B-1763) (Desulfovibrio salexigens).